Consider the following 84-residue polypeptide: NAD(P)H-quinone oxidoreductase subunit O (84 aa).

It belongs to the complex I NdhO subunit family. In terms of assembly, NDH-1 can be composed of about 15 different subunits; different subcomplexes with different compositions have been identified which probably have different functions.

The protein resides in the cellular thylakoid membrane. The enzyme catalyses a plastoquinone + NADH + (n+1) H(+)(in) = a plastoquinol + NAD(+) + n H(+)(out). The catalysed reaction is a plastoquinone + NADPH + (n+1) H(+)(in) = a plastoquinol + NADP(+) + n H(+)(out). In terms of biological role, NDH-1 shuttles electrons from an unknown electron donor, via FMN and iron-sulfur (Fe-S) centers, to quinones in the respiratory and/or the photosynthetic chain. The immediate electron acceptor for the enzyme in this species is believed to be plastoquinone. Couples the redox reaction to proton translocation, and thus conserves the redox energy in a proton gradient. Cyanobacterial NDH-1 also plays a role in inorganic carbon-concentration. The sequence is that of NAD(P)H-quinone oxidoreductase subunit O from Parasynechococcus marenigrum (strain WH8102).